The chain runs to 541 residues: Membrane protein insertase YidC (541 aa).

A helical transmembrane segment spans residues 6–26 (SLLVLALIFISFLVYQQWQLD). Residues 34 to 56 (EQTTSITATSDVPASSPSNSQAI) form a disordered region. The next 4 helical transmembrane spans lie at 337–357 (FWLLTFIQGIVSNWGLAIICV), 416–436 (LGGCLPILLQMPIFIALYWTF), 454–474 (LSAQDPYYILPILMGISMFLL), and 495–515 (PLIFMVFFLWFPSGLVLYWLV).

This sequence belongs to the OXA1/ALB3/YidC family. Type 1 subfamily. In terms of assembly, interacts with the Sec translocase complex via SecD. Specifically interacts with transmembrane segments of nascent integral membrane proteins during membrane integration.

The protein resides in the cell inner membrane. Required for the insertion and/or proper folding and/or complex formation of integral membrane proteins into the membrane. Involved in integration of membrane proteins that insert both dependently and independently of the Sec translocase complex, as well as at least some lipoproteins. Aids folding of multispanning membrane proteins. The sequence is that of Membrane protein insertase YidC from Haemophilus influenzae (strain PittEE).